Here is a 278-residue protein sequence, read N- to C-terminus: UPF0761 membrane protein NT05HA_1801 (278 aa).

6 helical membrane-spanning segments follow: residues Met-32–Phe-52, Gln-88–Ile-108, Pro-123–Gly-143, Leu-168–Val-188, Leu-203–Phe-223, and Ala-232–Leu-252.

The protein belongs to the UPF0761 family.

The protein localises to the cell inner membrane. The polypeptide is UPF0761 membrane protein NT05HA_1801 (Aggregatibacter aphrophilus (strain NJ8700) (Haemophilus aphrophilus)).